Consider the following 285-residue polypeptide: Acetyl-coenzyme A carboxylase carboxyl transferase subunit beta (285 aa).

Residues Ile29 to Asn285 enclose the CoA carboxyltransferase N-terminal domain. 4 residues coordinate Zn(2+): Cys33, Cys36, Cys52, and Cys55. Residues Cys33–Cys55 form a C4-type zinc finger.

It belongs to the AccD/PCCB family. In terms of assembly, acetyl-CoA carboxylase is a heterohexamer composed of biotin carboxyl carrier protein (AccB), biotin carboxylase (AccC) and two subunits each of ACCase subunit alpha (AccA) and ACCase subunit beta (AccD). The cofactor is Zn(2+).

The protein resides in the cytoplasm. It carries out the reaction N(6)-carboxybiotinyl-L-lysyl-[protein] + acetyl-CoA = N(6)-biotinyl-L-lysyl-[protein] + malonyl-CoA. Its pathway is lipid metabolism; malonyl-CoA biosynthesis; malonyl-CoA from acetyl-CoA: step 1/1. Functionally, component of the acetyl coenzyme A carboxylase (ACC) complex. Biotin carboxylase (BC) catalyzes the carboxylation of biotin on its carrier protein (BCCP) and then the CO(2) group is transferred by the transcarboxylase to acetyl-CoA to form malonyl-CoA. The chain is Acetyl-coenzyme A carboxylase carboxyl transferase subunit beta from Staphylococcus epidermidis (strain ATCC 35984 / DSM 28319 / BCRC 17069 / CCUG 31568 / BM 3577 / RP62A).